We begin with the raw amino-acid sequence, 533 residues long: Putative phosphate permease jhp_1384 (533 aa).

A run of 12 helical transmembrane segments spans residues 23–43 (IALALLFLIGAALLALIFGQA), 47–67 (GLLLIFAAVIGGYMAMNIGAN), 81–101 (AISMGGAILIAAVCEMLGAII), 129–149 (VMLASLLSGALWLHVATLIGA), 156–176 (SVVGGIMGAGMAAAGMSAINW), 182–202 (IVASWVISPLMGALIAMFFLM), 221–241 (VVPYLVALMSLAFSWYLIVKV), 248–268 (VGFEIQLACGCVLALLIFILF), 286–306 (VNELFNVPLIFAAALLSFAHG), 338–358 (VPLWIMVVGAAGIALGLSLYG), 372–392 (LDKMQAFCIALSAVITVLLAS), and 509–529 (LVTVPVSALLGALLFVALGFI).

It belongs to the inorganic phosphate transporter (PiT) (TC 2.A.20) family.

Its subcellular location is the cell membrane. Potential transporter for phosphate. In Helicobacter pylori (strain J99 / ATCC 700824) (Campylobacter pylori J99), this protein is Putative phosphate permease jhp_1384.